A 188-amino-acid chain; its full sequence is GMP synthase [glutamine-hydrolyzing] subunit A (188 aa).

In terms of domain architecture, Glutamine amidotransferase type-1 spans 1–188 (MIVIMDNGGQ…RNFAELCGEL (188 aa)). The Nucleophile role is filled by Cys-78. Residues His-165 and Glu-167 contribute to the active site.

As to quaternary structure, heterodimer composed of a glutamine amidotransferase subunit (A) and a GMP-binding subunit (B).

The enzyme catalyses XMP + L-glutamine + ATP + H2O = GMP + L-glutamate + AMP + diphosphate + 2 H(+). It participates in purine metabolism; GMP biosynthesis; GMP from XMP (L-Gln route): step 1/1. Functionally, catalyzes the synthesis of GMP from XMP. The polypeptide is GMP synthase [glutamine-hydrolyzing] subunit A (Thermococcus kodakarensis (strain ATCC BAA-918 / JCM 12380 / KOD1) (Pyrococcus kodakaraensis (strain KOD1))).